Consider the following 407-residue polypeptide: Lysophospholipid transporter LplT (407 aa).

The next 11 helical transmembrane spans lie at 18–38 (AVII…FATL), 53–73 (FLQM…GQIA), 91–111 (AGAL…LVGV), 139–159 (LMEA…GVLA), 163–183 (IYGA…ANML), 229–249 (WGAG…ALGI), 257–277 (LLNA…AKLV), 286–306 (LPAG…HNLM), 310–330 (SLLI…NALL), 343–365 (AIAV…YSLV), and 375–395 (IGIG…VWLI).

It belongs to the major facilitator superfamily. LplT (TC 2.A.1.42) family.

It localises to the cell inner membrane. Functionally, catalyzes the facilitated diffusion of 2-acyl-glycero-3-phosphoethanolamine (2-acyl-GPE) into the cell. The polypeptide is Lysophospholipid transporter LplT (Pectobacterium carotovorum subsp. carotovorum (strain PC1)).